The primary structure comprises 153 residues: Small ribosomal subunit protein bS16 (153 aa).

The protein belongs to the bacterial ribosomal protein bS16 family.

This is Small ribosomal subunit protein bS16 from Leifsonia xyli subsp. xyli (strain CTCB07).